The chain runs to 264 residues: Ribosomal protein L11 methyltransferase (264 aa).

Positions 116, 137, 159, and 200 each coordinate S-adenosyl-L-methionine.

This sequence belongs to the methyltransferase superfamily. PrmA family.

The protein localises to the cytoplasm. The catalysed reaction is L-lysyl-[protein] + 3 S-adenosyl-L-methionine = N(6),N(6),N(6)-trimethyl-L-lysyl-[protein] + 3 S-adenosyl-L-homocysteine + 3 H(+). Functionally, methylates ribosomal protein L11. The polypeptide is Ribosomal protein L11 methyltransferase (Thermotoga petrophila (strain ATCC BAA-488 / DSM 13995 / JCM 10881 / RKU-1)).